The following is a 265-amino-acid chain: 3-methyl-2-oxobutanoate hydroxymethyltransferase (265 aa).

2 residues coordinate Mg(2+): Asp-45 and Asp-84. Residues 45–46, Asp-84, and Lys-112 each bind 3-methyl-2-oxobutanoate; that span reads DS. Residue Glu-114 participates in Mg(2+) binding. Glu-181 functions as the Proton acceptor in the catalytic mechanism.

It belongs to the PanB family. In terms of assembly, homodecamer; pentamer of dimers. It depends on Mg(2+) as a cofactor.

The protein resides in the cytoplasm. It catalyses the reaction 3-methyl-2-oxobutanoate + (6R)-5,10-methylene-5,6,7,8-tetrahydrofolate + H2O = 2-dehydropantoate + (6S)-5,6,7,8-tetrahydrofolate. It functions in the pathway cofactor biosynthesis; (R)-pantothenate biosynthesis; (R)-pantoate from 3-methyl-2-oxobutanoate: step 1/2. Its function is as follows. Catalyzes the reversible reaction in which hydroxymethyl group from 5,10-methylenetetrahydrofolate is transferred onto alpha-ketoisovalerate to form ketopantoate. This is 3-methyl-2-oxobutanoate hydroxymethyltransferase from Yersinia pseudotuberculosis serotype IB (strain PB1/+).